The sequence spans 761 residues: Xaa-Pro dipeptidyl-peptidase (761 aa).

Catalysis depends on charge relay system residues Ser-347, Asp-467, and His-497.

The protein belongs to the peptidase S15 family. Homodimer.

Its subcellular location is the cytoplasm. It catalyses the reaction Hydrolyzes Xaa-Pro-|- bonds to release unblocked, N-terminal dipeptides from substrates including Ala-Pro-|-p-nitroanilide and (sequentially) Tyr-Pro-|-Phe-Pro-|-Gly-Pro-|-Ile.. Functionally, removes N-terminal dipeptides sequentially from polypeptides having unsubstituted N-termini provided that the penultimate residue is proline. In Streptococcus agalactiae serotype V (strain ATCC BAA-611 / 2603 V/R), this protein is Xaa-Pro dipeptidyl-peptidase.